The following is a 263-amino-acid chain: Methylesterase 2 (263 aa).

Catalysis depends on S85, which acts as the Acyl-ester intermediate. Residues D213 and H241 each act as charge relay system in the active site.

This sequence belongs to the AB hydrolase superfamily. Methylesterase family.

It catalyses the reaction methyl (indol-3-yl)acetate + H2O = (indol-3-yl)acetate + methanol + H(+). The catalysed reaction is methyl (-)-jasmonate + H2O = jasmonate + methanol + H(+). The enzyme catalyses methyl salicylate + H2O = salicylate + methanol + H(+). It participates in plant hormone biosynthesis. The protein operates within lipid metabolism; oxylipin biosynthesis. Esterase activity is down-regulated by salicylic acid (SA). Down-regulated by agrochemicals Paraoxon, 3,4-DCl and Profenofos. Its function is as follows. Methylesterase shown to have carboxylesterase activity, methyl indole-3-acetic acid (MeIAA) esterase activity, methyl salicylate (MeSA) esterase activity and methyl jasmonate (MeJA) esterase activity in vitro. The sequence is that of Methylesterase 2 from Arabidopsis thaliana (Mouse-ear cress).